Here is a 101-residue protein sequence, read N- to C-terminus: Urease subunit beta (101 aa).

It belongs to the urease beta subunit family. In terms of assembly, heterotrimer of UreA (gamma), UreB (beta) and UreC (alpha) subunits. Three heterotrimers associate to form the active enzyme.

The protein resides in the cytoplasm. It catalyses the reaction urea + 2 H2O + H(+) = hydrogencarbonate + 2 NH4(+). It participates in nitrogen metabolism; urea degradation; CO(2) and NH(3) from urea (urease route): step 1/1. This is Urease subunit beta from Pseudomonas fluorescens (strain SBW25).